We begin with the raw amino-acid sequence, 341 residues long: 5-formaminoimidazole-4-carboxamide-1-(beta)-D-ribofuranosyl 5'-monophosphate synthetase (341 aa).

2 residues coordinate 5-amino-1-(5-phospho-beta-D-ribosyl)imidazole-4-carboxamide: histidine 27 and serine 92. The ATP-grasp domain maps to 113–328 (RELLRWEADQ…MGERIAHEIK (216 aa)). Residues 143–195 (AEEV…VPAY) and glutamate 217 each bind ATP. Asparagine 237 serves as a coordination point for 5-amino-1-(5-phospho-beta-D-ribosyl)imidazole-4-carboxamide. Mg(2+) is bound by residues glutamate 276 and glutamate 289.

It belongs to the phosphohexose mutase family. Mg(2+) is required as a cofactor. Mn(2+) serves as cofactor.

It catalyses the reaction 5-amino-1-(5-phospho-beta-D-ribosyl)imidazole-4-carboxamide + formate + ATP = 5-formamido-1-(5-phospho-D-ribosyl)imidazole-4-carboxamide + ADP + phosphate. The protein operates within purine metabolism; IMP biosynthesis via de novo pathway; 5-formamido-1-(5-phospho-D-ribosyl)imidazole-4-carboxamide from 5-amino-1-(5-phospho-D-ribosyl)imidazole-4-carboxamide (formate route): step 1/1. Its function is as follows. Catalyzes the ATP- and formate-dependent formylation of 5-aminoimidazole-4-carboxamide-1-beta-d-ribofuranosyl 5'-monophosphate (AICAR) to 5-formaminoimidazole-4-carboxamide-1-beta-d-ribofuranosyl 5'-monophosphate (FAICAR) in the absence of folates. The chain is 5-formaminoimidazole-4-carboxamide-1-(beta)-D-ribofuranosyl 5'-monophosphate synthetase from Pyrobaculum aerophilum (strain ATCC 51768 / DSM 7523 / JCM 9630 / CIP 104966 / NBRC 100827 / IM2).